The chain runs to 185 residues: Elongation factor P (185 aa).

The protein belongs to the elongation factor P family.

It is found in the cytoplasm. It functions in the pathway protein biosynthesis; polypeptide chain elongation. Involved in peptide bond synthesis. Stimulates efficient translation and peptide-bond synthesis on native or reconstituted 70S ribosomes in vitro. Probably functions indirectly by altering the affinity of the ribosome for aminoacyl-tRNA, thus increasing their reactivity as acceptors for peptidyl transferase. This is Elongation factor P from Nitratidesulfovibrio vulgaris (strain DSM 19637 / Miyazaki F) (Desulfovibrio vulgaris).